Consider the following 576-residue polypeptide: Sulfite reductase [NADPH] hemoprotein beta-component (576 aa).

Cysteine 435, cysteine 441, cysteine 480, and cysteine 484 together coordinate [4Fe-4S] cluster. Position 484 (cysteine 484) interacts with siroheme.

It belongs to the nitrite and sulfite reductase 4Fe-4S domain family. Alpha(8)-beta(8). The alpha component is a flavoprotein, the beta component is a hemoprotein. Requires siroheme as cofactor. It depends on [4Fe-4S] cluster as a cofactor.

It carries out the reaction hydrogen sulfide + 3 NADP(+) + 3 H2O = sulfite + 3 NADPH + 4 H(+). It functions in the pathway sulfur metabolism; hydrogen sulfide biosynthesis; hydrogen sulfide from sulfite (NADPH route): step 1/1. Component of the sulfite reductase complex that catalyzes the 6-electron reduction of sulfite to sulfide. This is one of several activities required for the biosynthesis of L-cysteine from sulfate. The sequence is that of Sulfite reductase [NADPH] hemoprotein beta-component from Yersinia pestis bv. Antiqua (strain Antiqua).